We begin with the raw amino-acid sequence, 348 residues long: Terpene cyclase ctvD (348 aa).

A helical transmembrane segment spans residues 2–22 (ALSAYFLLCLSVLGLDAIYGF). Residue Asn-51 is glycosylated (N-linked (GlcNAc...) asparagine). A run of 7 helical transmembrane segments spans residues 77–97 (PGLS…WVAI), 116–136 (LFAM…WCAI), 161–181 (LIPI…LLPE), 191–211 (QIAI…HWGL), 235–255 (FAFV…LTLI), 283–303 (GLWF…LWAM), and 323–343 (LKVG…WLLW).

It belongs to the membrane-bound ascI terpene cyclase family.

The protein resides in the membrane. The protein operates within mycotoxin biosynthesis. Hydrolase; part of the gene cluster that mediates the biosynthesis of citreoviridin, an inhibitor of the of F1-ATPase beta-subunit. The HR-PKS ctvA accepts acetyl-CoA as the starter unit and catalyzes eight iterations of malonyl-CoA extension and four iterations of SAM-dependent methylation at C4, C12, C14, and C16. The KR and DH domains selectively act on the first six iterations to generate the hexaene chain. In the last three iterations, the KR and DH domains terminate their functions to yield a beta,delta-diketo ester moiety, which then undergoes intramolecular cyclization to yield an alpha-pyrone intermediate. Subsequently, ctvB methylates the alpha-pyrone hydroxyl group to generate citreomontanin. In order to form the tetrahydrofuran ring with the correct stereochemistry, the terminal alkenes of citreomontanin need to undergo isomerization to yield a (17Z)-hexaene, a step that could be catalyzed by ctvC. The (17Z)-hexaene then undergoes bisepoxidation by ctvC to form a (17R,16R,15S,14R)-bisepoxide moiety. Lastly, ctvD acts as a regioselective hydrolase to form the tetrahydrofuran ring with the substituents in the correct absolute configuration, completing the biosynthesis of citreoviridin. This chain is Terpene cyclase ctvD, found in Aspergillus terreus (strain NIH 2624 / FGSC A1156).